Here is a 417-residue protein sequence, read N- to C-terminus: Tyrosine--tRNA ligase (417 aa).

Tyrosine 36 contributes to the L-tyrosine binding site. A 'HIGH' region motif is present at residues 41–50 (PTADSLHIGH). L-tyrosine is bound by residues tyrosine 170 and glutamine 174. A 'KMSKS' region motif is present at residues 231-235 (KFGKS). ATP is bound at residue lysine 234. In terms of domain architecture, S4 RNA-binding spans 351 to 417 (TNLVELLIEA…GKKKYFMIIH (67 aa)).

Belongs to the class-I aminoacyl-tRNA synthetase family. TyrS type 1 subfamily. Homodimer.

The protein localises to the cytoplasm. The catalysed reaction is tRNA(Tyr) + L-tyrosine + ATP = L-tyrosyl-tRNA(Tyr) + AMP + diphosphate + H(+). Catalyzes the attachment of tyrosine to tRNA(Tyr) in a two-step reaction: tyrosine is first activated by ATP to form Tyr-AMP and then transferred to the acceptor end of tRNA(Tyr). The polypeptide is Tyrosine--tRNA ligase (Macrococcus caseolyticus (strain JCSC5402) (Macrococcoides caseolyticum)).